Reading from the N-terminus, the 178-residue chain is Stathmin-2-A (178 aa).

Residues 38–178 enclose the SLD domain; that stretch reads DDMEIKQLNK…RNKEQLELSG (141 aa). The stretch at 75-178 forms a coiled coil; the sequence is KKKDVSLGEI…RNKEQLELSG (104 aa).

It belongs to the stathmin family. In terms of tissue distribution, nervous tissue.

The protein resides in the cytoplasm. The protein localises to the membrane. Its subcellular location is the cell projection. It localises to the lamellipodium. The protein is Stathmin-2-A (stmn2-a) of Xenopus laevis (African clawed frog).